The primary structure comprises 462 residues: GTPase Der (462 aa).

EngA-type G domains are found at residues 3-166 (PVIA…TTET) and 175-348 (IKIA…HSAI). Residues 9 to 16 (GRPNVGKS), 56 to 60 (DTGGI), 118 to 121 (NKTD), 181 to 188 (GRPNVGKS), 228 to 232 (DTAGV), and 293 to 296 (NKWD) contribute to the GTP site. The region spanning 349-433 (QSFSTPKLTR…PLKIEFKGGQ (85 aa)) is the KH-like domain.

It belongs to the TRAFAC class TrmE-Era-EngA-EngB-Septin-like GTPase superfamily. EngA (Der) GTPase family. Associates with the 50S ribosomal subunit.

GTPase that plays an essential role in the late steps of ribosome biogenesis. The polypeptide is GTPase Der (Legionella pneumophila (strain Paris)).